The following is a 374-amino-acid chain: MSNSQKPPSLQPNEIIKRTKPDYNWKVIVELGKGGYGTVNKVIKVNEEGFAIDDKEYAMKTEQKFASKHSSRLKIERNVMASYSKCDAQCKEHFPELIDFGQSPVWKWIVMTIVGPSLEELKMKYKPSDIPPSTILQCGLQTMKAIHDFHQIGFLHRDIKPANYCIGYGSKSETIYVLDFGLARKYRLPEWYCSRASHRCEELGRRDDYESWFFMFIDLVDTTLIDWKGLTRPDAYAKKQELFTKLKTYEKEPMFKVISIYLDTLVYDSDVKFGFLRDAITDYARSCKLTLKEPLVWFKERNDNESGSTPTTSATACSPSSSTGTGTGTGVSKIASNIDQKSIASDRNEENSLDGSKTGTWKSTKTRNKKPSRK.

One can recognise a Protein kinase domain in the interval 25 to 296 (WKVIVELGKG…CKLTLKEPLV (272 aa)). Residues 31–39 (LGKGGYGTV) and K60 contribute to the ATP site. The Proton acceptor role is filled by D158. Residues 302–374 (NDNESGSTPT…KTRNKKPSRK (73 aa)) form a disordered region. Positions 306–324 (SGSTPTTSATACSPSSSTG) are enriched in low complexity. Positions 334-343 (IASNIDQKSI) are enriched in polar residues. Residues 364–374 (TKTRNKKPSRK) show a composition bias toward basic residues.

This sequence belongs to the protein kinase superfamily. Ser/Thr protein kinase family.

The enzyme catalyses L-seryl-[protein] + ATP = O-phospho-L-seryl-[protein] + ADP + H(+). The catalysed reaction is L-threonyl-[protein] + ATP = O-phospho-L-threonyl-[protein] + ADP + H(+). The polypeptide is Putative serine/threonine-protein kinase ZK507.3 (Caenorhabditis elegans).